We begin with the raw amino-acid sequence, 70 residues long: Drosomycin (70 aa).

A signal peptide spans 1-20 (MMQIKYLFALFAVLMLVVLG). A propeptide spanning residues 21–26 (ANEADA) is cleaved from the precursor. 4 disulfide bridges follow: cysteine 28-cysteine 70, cysteine 37-cysteine 59, cysteine 45-cysteine 65, and cysteine 49-cysteine 67. Asparagine 42 carries an N-linked (GlcNAc...) asparagine glycan.

Hemolymph (at protein level). Synthesized in the fat body and is secreted into the blood. In larvae, expressed in the visceral branches and posterior spiracles of the trachea.

It is found in the secreted. Its function is as follows. Possesses antifungal activity and is active against a relatively broad spectrum of filamentous fungi. It inhibits spore germination at high concentrations and at low concentrations delays growth of hyphae which subsequently exhibit abnormal morphology. Spz C-106 in the hemolymph controls expression of the antifungal peptide by acting as a ligand of Tl and inducing an intracellular signaling pathway. Part of a psh-dependent Toll pathway, which may function in activating the systematic immune response in response to localized melanization of the tracheal system. The protein is Drosomycin (Drs) of Drosophila melanogaster (Fruit fly).